Here is a 488-residue protein sequence, read N- to C-terminus: Putative BPI/LBP family protein At1g04970 (488 aa).

A signal peptide spans 1–24 (MDVGRCFLFLLLPSFFFLPSQTQS). 5 N-linked (GlcNAc...) asparagine glycosylation sites follow: asparagine 79, asparagine 109, asparagine 231, asparagine 242, and asparagine 341.

This sequence belongs to the BPI/LBP/Plunc superfamily. BPI/LBP (TC 1.C.40) family.

The polypeptide is Putative BPI/LBP family protein At1g04970 (Arabidopsis thaliana (Mouse-ear cress)).